The sequence spans 216 residues: Adenylate kinase (216 aa).

Gly-10–Thr-15 contacts ATP. Residues Ser-30–Val-59 form an NMP region. AMP-binding positions include Thr-31, Arg-36, Gln-57 to Val-59, Gly-85 to Arg-88, and Gln-92. The interval Gly-126–Asp-163 is LID. ATP is bound at residue Arg-127. Cys-130 and Cys-133 together coordinate Zn(2+). Ser-136 to Tyr-137 contacts ATP. Cys-150 and Cys-153 together coordinate Zn(2+). AMP contacts are provided by Arg-160 and Arg-171. Residue Glu-199 coordinates ATP.

It belongs to the adenylate kinase family. Monomer.

The protein localises to the cytoplasm. The enzyme catalyses AMP + ATP = 2 ADP. It participates in purine metabolism; AMP biosynthesis via salvage pathway; AMP from ADP: step 1/1. In terms of biological role, catalyzes the reversible transfer of the terminal phosphate group between ATP and AMP. Plays an important role in cellular energy homeostasis and in adenine nucleotide metabolism. This chain is Adenylate kinase, found in Clostridium botulinum (strain Langeland / NCTC 10281 / Type F).